The chain runs to 400 residues: Multidrug resistance protein MdtH (400 aa).

10 consecutive transmembrane segments (helical) span residues 13–33 (YFLL…FPLI), 34–54 (SIRF…ALGL), 99–116 (PWIL…GTLF), 139–159 (LLLM…SWLL), 165–185 (LVCW…AWLL), 214–234 (VLTL…FPIV), 244–264 (AVKW…YPIA), 289–309 (FPVG…LFYL), 340–360 (LGLA…YDIG), and 365–385 (LPEL…YALH).

This sequence belongs to the major facilitator superfamily. DHA1 family. MdtH (TC 2.A.1.2.21) subfamily.

Its subcellular location is the cell inner membrane. The protein is Multidrug resistance protein MdtH of Proteus mirabilis (strain HI4320).